Consider the following 345-residue polypeptide: Ferrochelatase (345 aa).

Fe cation contacts are provided by histidine 199 and glutamate 302.

The protein belongs to the ferrochelatase family.

Its subcellular location is the cytoplasm. The enzyme catalyses heme b + 2 H(+) = protoporphyrin IX + Fe(2+). It participates in porphyrin-containing compound metabolism; protoheme biosynthesis; protoheme from protoporphyrin-IX: step 1/1. Functionally, catalyzes the ferrous insertion into protoporphyrin IX. This chain is Ferrochelatase, found in Porphyromonas gingivalis (strain ATCC 33277 / DSM 20709 / CIP 103683 / JCM 12257 / NCTC 11834 / 2561).